Here is a 111-residue protein sequence, read N- to C-terminus: Photosystem II reaction center Psb28 protein (111 aa).

The protein belongs to the Psb28 family. In terms of assembly, part of the photosystem II complex.

It localises to the cellular thylakoid membrane. In Crocosphaera subtropica (strain ATCC 51142 / BH68) (Cyanothece sp. (strain ATCC 51142)), this protein is Photosystem II reaction center Psb28 protein.